Reading from the N-terminus, the 258-residue chain is 5'-nucleotidase SurE (258 aa).

Asp18, Asp19, Ser49, and Asn102 together coordinate a divalent metal cation.

Belongs to the SurE nucleotidase family. It depends on a divalent metal cation as a cofactor.

The protein resides in the cytoplasm. The enzyme catalyses a ribonucleoside 5'-phosphate + H2O = a ribonucleoside + phosphate. Nucleotidase that shows phosphatase activity on nucleoside 5'-monophosphates. The sequence is that of 5'-nucleotidase SurE from Vibrio parahaemolyticus serotype O3:K6 (strain RIMD 2210633).